Consider the following 243-residue polypeptide: Arginine transport ATP-binding protein ArtP (243 aa).

The ABC transporter domain maps to 3-242 (IRVKNLNFFY…KTEQFKHYLS (240 aa)). 35–42 (GPSGAGKS) serves as a coordination point for ATP.

This sequence belongs to the ABC transporter superfamily. In terms of assembly, the complex is composed of two ATP-binding proteins (ArtP), two transmembrane proteins (ArtM and ArtQ) and a solute-binding protein (ArtI).

It localises to the cell inner membrane. The catalysed reaction is a polar amino acid(out) + ATP + H2O = a polar amino acid(in) + ADP + phosphate + H(+). The enzyme catalyses L-arginine(out) + ATP + H2O = L-arginine(in) + ADP + phosphate + H(+). Its function is as follows. Part of the ABC transporter complex ArtPIQM involved in arginine transport. Probably responsible for energy coupling to the transport system. The sequence is that of Arginine transport ATP-binding protein ArtP (artP) from Haemophilus influenzae (strain ATCC 51907 / DSM 11121 / KW20 / Rd).